A 222-amino-acid chain; its full sequence is Probable transaldolase (222 aa).

The active-site Schiff-base intermediate with substrate is K83.

Belongs to the transaldolase family. Type 3B subfamily.

The protein resides in the cytoplasm. It carries out the reaction D-sedoheptulose 7-phosphate + D-glyceraldehyde 3-phosphate = D-erythrose 4-phosphate + beta-D-fructose 6-phosphate. It participates in carbohydrate degradation; pentose phosphate pathway; D-glyceraldehyde 3-phosphate and beta-D-fructose 6-phosphate from D-ribose 5-phosphate and D-xylulose 5-phosphate (non-oxidative stage): step 2/3. Transaldolase is important for the balance of metabolites in the pentose-phosphate pathway. This Nitrosopumilus maritimus (strain SCM1) protein is Probable transaldolase.